The sequence spans 339 residues: tRNA N6-adenosine threonylcarbamoyltransferase (339 aa).

Residues H111 and H115 each contribute to the Fe cation site. Substrate contacts are provided by residues 139 to 143, D172, G185, D189, and N280; that span reads LVSGG. D308 provides a ligand contact to Fe cation.

It belongs to the KAE1 / TsaD family. Fe(2+) is required as a cofactor.

It is found in the cytoplasm. It catalyses the reaction L-threonylcarbamoyladenylate + adenosine(37) in tRNA = N(6)-L-threonylcarbamoyladenosine(37) in tRNA + AMP + H(+). Required for the formation of a threonylcarbamoyl group on adenosine at position 37 (t(6)A37) in tRNAs that read codons beginning with adenine. Is involved in the transfer of the threonylcarbamoyl moiety of threonylcarbamoyl-AMP (TC-AMP) to the N6 group of A37, together with TsaE and TsaB. TsaD likely plays a direct catalytic role in this reaction. This chain is tRNA N6-adenosine threonylcarbamoyltransferase, found in Phocaeicola vulgatus (strain ATCC 8482 / DSM 1447 / JCM 5826 / CCUG 4940 / NBRC 14291 / NCTC 11154) (Bacteroides vulgatus).